The following is a 261-amino-acid chain: Acidic leucine-rich nuclear phosphoprotein 32 family member A (261 aa).

LRR repeat units follow at residues 16 to 37 (QITELNLDNCRSTSIVGLTDEY), 39 to 60 (ALESLSLINVGLTTLKGFPKLP), 61 to 83 (NLKKLELSDNRISSGLNYLTTSP), and 84 to 105 (KLQYLNLSGNKIKDLETLKPLE). Residues 118–156 (NDATQVDNYREKIFKMLPSLNFLDGFDCNDEEVQSDGDD) enclose the LRRCT domain. Acidic residues-rich tracts occupy residues 145 to 185 (CNDE…EEAN) and 194 to 229 (YNDDLEEDNSDWEGEDEAGEEDEEEDSDIDDADGDA). Positions 145-261 (CNDEEVQSDG…VRGKKRKHDG (117 aa)) are disordered. Positions 238–252 (AKDKDGEKEADESQV) are enriched in basic and acidic residues.

This sequence belongs to the ANP32 family. Post-translationally, phosphorylated on serine residues.

The protein resides in the nucleus. It is found in the cytoplasm. Its function is as follows. Implicated in a number of cellular processes, including proliferation, differentiation, caspase-dependent and caspase-independent apoptosis, suppression of transformation (tumor suppressor), inhibition of protein phosphatase 2A, regulation of mRNA trafficking and stability, and inhibition of acetyltransferases as part of the INHAT (inhibitor of histone acetyltransferases) complex. The sequence is that of Acidic leucine-rich nuclear phosphoprotein 32 family member A (Anp32a) from Drosophila melanogaster (Fruit fly).